Here is a 92-residue protein sequence, read N- to C-terminus: Small ribosomal subunit protein uS19 (92 aa).

Belongs to the universal ribosomal protein uS19 family.

In terms of biological role, protein S19 forms a complex with S13 that binds strongly to the 16S ribosomal RNA. This chain is Small ribosomal subunit protein uS19, found in Pelobacter propionicus (strain DSM 2379 / NBRC 103807 / OttBd1).